We begin with the raw amino-acid sequence, 158 residues long: Fucolectin (158 aa).

Residues 16-148 (KATQSAQLRG…TSESLHLCEV (133 aa)) are F5/8 type C-like. N35, D38, N40, and S49 together coordinate Ca(2+). 3 cysteine pairs are disulfide-bonded: C50/C146, C82/C83, and C108/C124. Residues H52 and R79 each contribute to the alpha-L-fucose site. The Cell attachment site motif lies at 79-81 (RGD). R86 serves as a coordination point for alpha-L-fucose. Ca(2+) contacts are provided by C146 and E147.

The protein belongs to the fucolectin family. Homotrimer.

The protein localises to the secreted. Functionally, acts as a defensive agent. Recognizes blood group fucosylated oligosaccharides including A, B, H and Lewis B-type antigens. Does not recognize Lewis A antigen and has low affinity for monovalent haptens. The sequence is that of Fucolectin from Anguilla anguilla (European freshwater eel).